The sequence spans 86 residues: Anti-adapter protein IraP (86 aa).

A coiled-coil region spans residues 1 to 38 (MKNLIAELLVKLAQKEEEAKELTVQVEALEIVVTALLR).

It belongs to the IraP family. Interacts with RssB.

It localises to the cytoplasm. In terms of biological role, inhibits RpoS proteolysis by regulating RssB activity, thereby increasing the stability of the sigma stress factor RpoS especially during phosphate starvation, but also in stationary phase and during nitrogen starvation. Its effect on RpoS stability is due to its interaction with RssB, which probably blocks the interaction of RssB with RpoS, and the consequent delivery of the RssB-RpoS complex to the ClpXP protein degradation pathway. The polypeptide is Anti-adapter protein IraP (Klebsiella pneumoniae (strain 342)).